A 115-amino-acid chain; its full sequence is MKISLHNKRQRGDQNQNMSVFNVLKPLLKGSNSFKVKLNGFLFNNVSTITIRTLMKTHKGTAKRWRRTGNTFKRGIAGRKHGNIGWSHRSLKALTGRKIAHPAYSKHLKRLLPYH.

This sequence belongs to the bacterial ribosomal protein bL35 family.

It localises to the mitochondrion. In Saccharomyces cerevisiae (strain YJM789) (Baker's yeast), this protein is Large ribosomal subunit protein bL35m.